Consider the following 500-residue polypeptide: Beta-xylosidase (500 aa).

Residue glutamate 160 is the Proton donor of the active site. Glutamate 277 (nucleophile) is an active-site residue.

The protein belongs to the glycosyl hydrolase 39 family.

It carries out the reaction Hydrolysis of (1-&gt;4)-beta-D-xylans, to remove successive D-xylose residues from the non-reducing termini.. This Thermoanaerobacterium saccharolyticum (strain DSM 8691 / JW/SL-YS485) protein is Beta-xylosidase (xynB).